The sequence spans 231 residues: 7-cyano-7-deazaguanine synthase (231 aa).

An ATP-binding site is contributed by 8–18 (FSGGQDSTTCL). Zn(2+)-binding residues include cysteine 188, cysteine 197, cysteine 200, and cysteine 203.

The protein belongs to the QueC family. Zn(2+) serves as cofactor.

The enzyme catalyses 7-carboxy-7-deazaguanine + NH4(+) + ATP = 7-cyano-7-deazaguanine + ADP + phosphate + H2O + H(+). It participates in purine metabolism; 7-cyano-7-deazaguanine biosynthesis. In terms of biological role, catalyzes the ATP-dependent conversion of 7-carboxy-7-deazaguanine (CDG) to 7-cyano-7-deazaguanine (preQ(0)). This Escherichia coli (strain SE11) protein is 7-cyano-7-deazaguanine synthase.